The chain runs to 505 residues: Lysine--tRNA ligase (505 aa).

The Mg(2+) site is built by glutamate 403 and glutamate 410.

Belongs to the class-II aminoacyl-tRNA synthetase family. As to quaternary structure, homodimer. Mg(2+) serves as cofactor.

The protein localises to the cytoplasm. The catalysed reaction is tRNA(Lys) + L-lysine + ATP = L-lysyl-tRNA(Lys) + AMP + diphosphate. In Methanospirillum hungatei JF-1 (strain ATCC 27890 / DSM 864 / NBRC 100397 / JF-1), this protein is Lysine--tRNA ligase.